The chain runs to 116 residues: Ribosome-binding factor A (116 aa).

Belongs to the RbfA family. Monomer. Binds 30S ribosomal subunits, but not 50S ribosomal subunits or 70S ribosomes.

Its subcellular location is the cytoplasm. Functionally, one of several proteins that assist in the late maturation steps of the functional core of the 30S ribosomal subunit. Associates with free 30S ribosomal subunits (but not with 30S subunits that are part of 70S ribosomes or polysomes). Required for efficient processing of 16S rRNA. May interact with the 5'-terminal helix region of 16S rRNA. In Streptococcus pyogenes serotype M3 (strain SSI-1), this protein is Ribosome-binding factor A.